Consider the following 240-residue polypeptide: uncharacterized protein (240 aa).

The segment at 3–27 (LKCLECDKLLSSIEMAEFHSTKTSH) adopts a C2H2-type zinc-finger fold. Disordered stretches follow at residues 21–43 (HSTK…RSPE) and 120–171 (AEIE…RFSI). A compositionally biased stretch (basic and acidic residues) spans 120 to 136 (AEIERDKKRRAAERENK). Over residues 155–166 (SSSTCTRTPPTS) the composition is skewed to low complexity.

This is an uncharacterized protein from Schizosaccharomyces pombe (strain 972 / ATCC 24843) (Fission yeast).